The primary structure comprises 298 residues: Acetylglutamate kinase (298 aa).

Residues 64–65 (GG), arginine 86, and asparagine 195 each bind substrate.

This sequence belongs to the acetylglutamate kinase family. ArgB subfamily.

It localises to the cytoplasm. The catalysed reaction is N-acetyl-L-glutamate + ATP = N-acetyl-L-glutamyl 5-phosphate + ADP. The protein operates within amino-acid biosynthesis; L-arginine biosynthesis; N(2)-acetyl-L-ornithine from L-glutamate: step 2/4. Catalyzes the ATP-dependent phosphorylation of N-acetyl-L-glutamate. This is Acetylglutamate kinase from Aquifex aeolicus (strain VF5).